The chain runs to 317 residues: tRNA-cytidine(32) 2-sulfurtransferase (317 aa).

The PP-loop motif motif lies at 46–51 (SGGKDS). 3 residues coordinate [4Fe-4S] cluster: cysteine 121, cysteine 124, and cysteine 212.

The protein belongs to the TtcA family. In terms of assembly, homodimer. Mg(2+) is required as a cofactor. [4Fe-4S] cluster serves as cofactor.

It localises to the cytoplasm. The catalysed reaction is cytidine(32) in tRNA + S-sulfanyl-L-cysteinyl-[cysteine desulfurase] + AH2 + ATP = 2-thiocytidine(32) in tRNA + L-cysteinyl-[cysteine desulfurase] + A + AMP + diphosphate + H(+). It participates in tRNA modification. Functionally, catalyzes the ATP-dependent 2-thiolation of cytidine in position 32 of tRNA, to form 2-thiocytidine (s(2)C32). The sulfur atoms are provided by the cysteine/cysteine desulfurase (IscS) system. The polypeptide is tRNA-cytidine(32) 2-sulfurtransferase (Shewanella loihica (strain ATCC BAA-1088 / PV-4)).